The sequence spans 140 residues: ATP synthase epsilon chain (140 aa).

This sequence belongs to the ATPase epsilon chain family. In terms of assembly, F-type ATPases have 2 components, CF(1) - the catalytic core - and CF(0) - the membrane proton channel. CF(1) has five subunits: alpha(3), beta(3), gamma(1), delta(1), epsilon(1). CF(0) has three main subunits: a, b and c.

The protein localises to the cell inner membrane. In terms of biological role, produces ATP from ADP in the presence of a proton gradient across the membrane. This chain is ATP synthase epsilon chain, found in Nitrosomonas europaea (strain ATCC 19718 / CIP 103999 / KCTC 2705 / NBRC 14298).